The chain runs to 325 residues: CRISPR-associated endonuclease Cas1 2 (325 aa).

Mn(2+)-binding residues include E145, H212, and D225. Positions 283–325 (EEEDPVEEDPTRPGGLWDLEGEVEGGVAYGGDDPGEGAEEPEG) are disordered. Acidic residues predominate over residues 315 to 325 (DPGEGAEEPEG).

This sequence belongs to the CRISPR-associated endonuclease Cas1 family. Homodimer, forms a heterotetramer with a Cas2 homodimer. Requires Mg(2+) as cofactor. It depends on Mn(2+) as a cofactor.

Functionally, CRISPR (clustered regularly interspaced short palindromic repeat), is an adaptive immune system that provides protection against mobile genetic elements (viruses, transposable elements and conjugative plasmids). CRISPR clusters contain spacers, sequences complementary to antecedent mobile elements, and target invading nucleic acids. CRISPR clusters are transcribed and processed into CRISPR RNA (crRNA). Acts as a dsDNA endonuclease. Involved in the integration of spacer DNA into the CRISPR cassette. The polypeptide is CRISPR-associated endonuclease Cas1 2 (Thermus thermophilus (strain ATCC 27634 / DSM 579 / HB8)).